The primary structure comprises 122 residues: Hexon-interlacing protein (122 aa).

Residues 72–106 are a coiled coil; it reads VTELNESIDELQQKMTELEKRLKIMEEKIEEIKLA.

It belongs to the adenoviridae hexon-interlacing protein family. Homotrimer. Interacts with hexon protein; this interaction tethers the hexons together. Self-interacts with adjacent proteins. Interacts with kinesin light chain KLC1; this interaction leads to capsid disruption at the nuclear pore complex during virus entry into host cell.

It is found in the virion. The protein resides in the host nucleus. Structural component of the virion that acts as a cement protein on the capsid exterior and forms triskelion structures consisting of three molecules that stabilize three hexon trimers at the center of each icosahedral facet and fixes the peripentonal hexons. Dispensable for assembly. During virus entry, recruits the anterograde motor kinesin-1 to the capsid docked at the nuclear pore complex thereby subjecting the docked capsid to a pulling force. The resulting tension leads to capsid disruption, dispersion of capsid fragments toward cell periphery and eventually viral DNA entry into the host nucleus. The protein is Hexon-interlacing protein of Tupaiidae (tree shrews).